Here is a 302-residue protein sequence, read N- to C-terminus: Putative F-box protein At1g32420 (302 aa).

Residues 1-10 (MKRGNEENNH) show a composition bias toward basic and acidic residues. A disordered region spans residues 1–27 (MKRGNEENNHKTSSSSSTQRLSRRKIS). In terms of domain architecture, F-box spans 31-78 (KSGNVNIPLDLTVEILKKLPAKSLLRFQCVSKQWLSIISSRRDFIDSI).

This is Putative F-box protein At1g32420 from Arabidopsis thaliana (Mouse-ear cress).